Consider the following 276-residue polypeptide: Diaminopimelate epimerase (276 aa).

3 residues coordinate substrate: Asn-13, Gln-46, and Asn-66. Cys-75 (proton donor) is an active-site residue. Substrate-binding positions include 76 to 77 (GN), Asn-159, Asn-192, and 210 to 211 (ER). The active-site Proton acceptor is Cys-219. Residue 220 to 221 (GT) coordinates substrate.

Belongs to the diaminopimelate epimerase family. In terms of assembly, homodimer.

It is found in the cytoplasm. The enzyme catalyses (2S,6S)-2,6-diaminopimelate = meso-2,6-diaminopimelate. The protein operates within amino-acid biosynthesis; L-lysine biosynthesis via DAP pathway; DL-2,6-diaminopimelate from LL-2,6-diaminopimelate: step 1/1. In terms of biological role, catalyzes the stereoinversion of LL-2,6-diaminopimelate (L,L-DAP) to meso-diaminopimelate (meso-DAP), a precursor of L-lysine and an essential component of the bacterial peptidoglycan. This Pseudomonas aeruginosa (strain UCBPP-PA14) protein is Diaminopimelate epimerase.